The chain runs to 349 residues: Lipoyl synthase (349 aa).

Residues Cys55, Cys60, Cys66, Cys81, Cys85, Cys88, and Ser292 each coordinate [4Fe-4S] cluster. The Radical SAM core domain maps to 67–281 (WESREATFLI…ADFARELGFG (215 aa)).

Belongs to the radical SAM superfamily. Lipoyl synthase family. The cofactor is [4Fe-4S] cluster.

The protein resides in the cytoplasm. It catalyses the reaction [[Fe-S] cluster scaffold protein carrying a second [4Fe-4S](2+) cluster] + N(6)-octanoyl-L-lysyl-[protein] + 2 oxidized [2Fe-2S]-[ferredoxin] + 2 S-adenosyl-L-methionine + 4 H(+) = [[Fe-S] cluster scaffold protein] + N(6)-[(R)-dihydrolipoyl]-L-lysyl-[protein] + 4 Fe(3+) + 2 hydrogen sulfide + 2 5'-deoxyadenosine + 2 L-methionine + 2 reduced [2Fe-2S]-[ferredoxin]. The protein operates within protein modification; protein lipoylation via endogenous pathway; protein N(6)-(lipoyl)lysine from octanoyl-[acyl-carrier-protein]: step 2/2. Functionally, catalyzes the radical-mediated insertion of two sulfur atoms into the C-6 and C-8 positions of the octanoyl moiety bound to the lipoyl domains of lipoate-dependent enzymes, thereby converting the octanoylated domains into lipoylated derivatives. The protein is Lipoyl synthase of Corynebacterium diphtheriae (strain ATCC 700971 / NCTC 13129 / Biotype gravis).